The sequence spans 199 residues: Protein p2 (199 aa).

The protein localises to the host cytoplasm. The chain is Protein p2 from Avena sativa (Oat).